Here is a 138-residue protein sequence, read N- to C-terminus: Basic phospholipase A2 Bs-N6 (138 aa).

An N-terminal signal peptide occupies residues 1 to 16; the sequence is MRTLWIVAVLLVGVEG. 7 disulfide bridges follow: Cys-42–Cys-131, Cys-44–Cys-60, Cys-59–Cys-111, Cys-65–Cys-138, Cys-66–Cys-104, Cys-73–Cys-97, and Cys-91–Cys-102. Tyr-43, Gly-45, and Gly-47 together coordinate Ca(2+). His-63 is a catalytic residue. Residue Asp-64 coordinates Ca(2+). Residue Asp-105 is part of the active site.

As to quaternary structure, monomer. Requires Ca(2+) as cofactor. Contains 7 disulfide bonds. As to expression, expressed by the venom gland.

The protein localises to the secreted. The enzyme catalyses a 1,2-diacyl-sn-glycero-3-phosphocholine + H2O = a 1-acyl-sn-glycero-3-phosphocholine + a fatty acid + H(+). Its function is as follows. Snake venom phospholipase A2 (PLA2) that shows myotoxic activities. PLA2 catalyzes the calcium-dependent hydrolysis of the 2-acyl groups in 3-sn-phosphoglycerides. The polypeptide is Basic phospholipase A2 Bs-N6 (Bothriechis schlegelii (Eyelash palm pitviper)).